Here is a 233-residue protein sequence, read N- to C-terminus: Enolase-phosphatase E1 (233 aa).

Mg(2+) contacts are provided by Asp-16 and Glu-18. Substrate-binding positions include 131-132 and Lys-167; that span reads SS. Asp-193 is a Mg(2+) binding site.

The protein belongs to the HAD-like hydrolase superfamily. MasA/MtnC family. As to quaternary structure, monomer. Mg(2+) serves as cofactor.

It is found in the cytoplasm. Its subcellular location is the nucleus. It catalyses the reaction 5-methylsulfanyl-2,3-dioxopentyl phosphate + H2O = 1,2-dihydroxy-5-(methylsulfanyl)pent-1-en-3-one + phosphate. Its pathway is amino-acid biosynthesis; L-methionine biosynthesis via salvage pathway; L-methionine from S-methyl-5-thio-alpha-D-ribose 1-phosphate: step 3/6. It participates in amino-acid biosynthesis; L-methionine biosynthesis via salvage pathway; L-methionine from S-methyl-5-thio-alpha-D-ribose 1-phosphate: step 4/6. In terms of biological role, bifunctional enzyme that catalyzes the enolization of 2,3-diketo-5-methylthiopentyl-1-phosphate (DK-MTP-1-P) into the intermediate 2-hydroxy-3-keto-5-methylthiopentenyl-1-phosphate (HK-MTPenyl-1-P), which is then dephosphorylated to form the acireductone 1,2-dihydroxy-3-keto-5-methylthiopentene (DHK-MTPene). The sequence is that of Enolase-phosphatase E1 from Meyerozyma guilliermondii (strain ATCC 6260 / CBS 566 / DSM 6381 / JCM 1539 / NBRC 10279 / NRRL Y-324) (Yeast).